Consider the following 69-residue polypeptide: Conotoxin Eb6.14 (69 aa).

The N-terminal stretch at 1–17 (VLIIAVLFLTACQLTTA) is a signal peptide. Positions 18–41 (ETYSRGRQKHRARRSTDKNSKWTR) are excised as a propeptide. 3 cysteine pairs are disulfide-bonded: C43–C57, C50–C61, and C56–C68.

The protein belongs to the conotoxin O1 superfamily. Expressed by the venom duct.

It localises to the secreted. The sequence is that of Conotoxin Eb6.14 (E1) from Conus ebraeus (Hebrew cone).